The chain runs to 361 residues: Beta-hexosaminidase (361 aa).

Residues D69, R77, R144, and 174-175 (KH) each bind substrate. H187 serves as the catalytic Proton donor/acceptor. The active-site Nucleophile is D258.

The protein belongs to the glycosyl hydrolase 3 family. NagZ subfamily.

It localises to the cytoplasm. It carries out the reaction Hydrolysis of terminal non-reducing N-acetyl-D-hexosamine residues in N-acetyl-beta-D-hexosaminides.. Its pathway is cell wall biogenesis; peptidoglycan recycling. Functionally, plays a role in peptidoglycan recycling by cleaving the terminal beta-1,4-linked N-acetylglucosamine (GlcNAc) from peptide-linked peptidoglycan fragments, giving rise to free GlcNAc, anhydro-N-acetylmuramic acid and anhydro-N-acetylmuramic acid-linked peptides. This Neisseria meningitidis serogroup C (strain 053442) protein is Beta-hexosaminidase.